Consider the following 734-residue polypeptide: Photosystem I P700 chlorophyll a apoprotein A2 (734 aa).

The next 8 helical transmembrane spans lie at 46–69 (IFAS…FHVA), 135–158 (LYTG…FHLQ), 175–199 (LNHH…HVAI), 273–291 (IAHH…GHMY), 330–353 (LHFQ…QHMY), 369–395 (AALY…IFFI), 417–439 (AIIS…LYVH), and 517–535 (FLVH…LILV). Residues C559 and C568 each coordinate [4Fe-4S] cluster. Helical transmembrane passes span 575–596 (AFYL…YWHW) and 643–665 (LSVW…MFLI). H654, M662, and Y670 together coordinate chlorophyll a. Residue W671 coordinates phylloquinone. A helical transmembrane segment spans residues 707 to 727 (LVGLAHFSVGYIFTYAAFLIA).

The protein belongs to the PsaA/PsaB family. In terms of assembly, the PsaA/B heterodimer binds the P700 chlorophyll special pair and subsequent electron acceptors. PSI consists of a core antenna complex that captures photons, and an electron transfer chain that converts photonic excitation into a charge separation. The eukaryotic PSI reaction center is composed of at least 11 subunits. P700 is a chlorophyll a/chlorophyll a' dimer, A0 is one or more chlorophyll a, A1 is one or both phylloquinones and FX is a shared 4Fe-4S iron-sulfur center. is required as a cofactor.

It is found in the plastid. The protein resides in the chloroplast thylakoid membrane. The enzyme catalyses reduced [plastocyanin] + hnu + oxidized [2Fe-2S]-[ferredoxin] = oxidized [plastocyanin] + reduced [2Fe-2S]-[ferredoxin]. Its function is as follows. PsaA and PsaB bind P700, the primary electron donor of photosystem I (PSI), as well as the electron acceptors A0, A1 and FX. PSI is a plastocyanin-ferredoxin oxidoreductase, converting photonic excitation into a charge separation, which transfers an electron from the donor P700 chlorophyll pair to the spectroscopically characterized acceptors A0, A1, FX, FA and FB in turn. Oxidized P700 is reduced on the lumenal side of the thylakoid membrane by plastocyanin. The protein is Photosystem I P700 chlorophyll a apoprotein A2 of Jasminum nudiflorum (Winter jasmine).